The chain runs to 90 residues: Putative beta-neurotoxin RjAa2f (90 aa).

The first 18 residues, methionine 1–cysteine 18, serve as a signal peptide directing secretion. The 71-residue stretch at lysine 19–glycine 89 folds into the LCN-type CS-alpha/beta domain. Cystine bridges form between cysteine 29–cysteine 88, cysteine 33–cysteine 62, cysteine 40–cysteine 69, and cysteine 44–cysteine 71.

It belongs to the long (4 C-C) scorpion toxin superfamily. Sodium channel inhibitor family. Beta subfamily. As to expression, expressed by the venom gland.

Its subcellular location is the secreted. In terms of biological role, beta toxins bind voltage-independently at site-4 of sodium channels (Nav) and shift the voltage of activation toward more negative potentials thereby affecting sodium channel activation and promoting spontaneous and repetitive firing. In Rhopalurus junceus (Caribbean blue scorpion), this protein is Putative beta-neurotoxin RjAa2f.